A 261-amino-acid polypeptide reads, in one-letter code: Synaptophysin-like protein 1 (261 aa).

Residues 1–33 (MASKANMVRQRFSRLSQRMSAFQINLNPLKEPL) are Cytoplasmic-facing. The region spanning 28–239 (PLKEPLGFIK…NAWFVYKETS (212 aa)) is the MARVEL domain. Residues 34–54 (GFIKILEWFASIFAFATCGGF) traverse the membrane as a helical segment. Over 55 to 117 (KGKTEIQVNC…LIGDYSSSAQ (63 aa)) the chain is Vesicular. 2 N-linked (GlcNAc...) asparagine glycosylation sites follow: asparagine 72 and asparagine 95. The helical transmembrane segment at 118 to 138 (FYVTFAVFVFLYCIAALLLYV) threads the bilayer. Residues 139 to 151 (GYTNLYRDSRKLP) are Cytoplasmic-facing. A helical membrane pass occupies residues 152-172 (MIDFIVTLVATFLWLVSSSAW). Over 173-214 (AKALTDIKVATGHRIVEELEICNPESGVSCYFVSVTSMGSLN) the chain is Vesicular. The N-linked (GlcNAc...) asparagine glycan is linked to asparagine 214. A helical membrane pass occupies residues 215–235 (VSVIFGFLNMILWGGNAWFVY). Topologically, residues 236–261 (KETSLHSPSNTSASHSQGGGPPTSGM) are cytoplasmic. Residues 241-251 (HSPSNTSASHS) are compositionally biased toward polar residues. The interval 241–261 (HSPSNTSASHSQGGGPPTSGM) is disordered. Positions 252-261 (QGGGPPTSGM) are enriched in gly residues.

Belongs to the synaptophysin/synaptobrevin family. Ubiquitously expressed.

It is found in the cytoplasmic vesicle membrane. Its subcellular location is the melanosome. The chain is Synaptophysin-like protein 1 (Sypl1) from Mus musculus (Mouse).